The primary structure comprises 1574 residues: Multiple epidermal growth factor-like domains protein 6 (1574 aa).

The N-terminal stretch at 1–27 (MPVRAEARAAWRVVALALLLLPAMPAA) is a signal peptide. The EMI domain maps to 40 to 122 (MPHVCAEQKL…QKPGQEGCLS (83 aa)). Intrachain disulfides connect C44-C108, C74-C80, C107-C120, C127-C138, C134-C147, C149-C162, C168-C179, C175-C188, C190-C203, C209-C220, C216-C230, C232-C245, C251-C262, C258-C271, C273-C286, C292-C303, C299-C312, C314-C327, C338-C349, C345-C358, C360-C373, C379-C389, C385-C398, C400-C411, C419-C430, C426-C439, C441-C454, C524-C537, C531-C544, C546-C555, C568-C580, C574-C587, C589-C598, C611-C623, C617-C630, C632-C641, C654-C668, C660-C675, C677-C686, C699-C711, C705-C718, C722-C731, C744-C755, C750-C762, C764-C773, C786-C799, C793-C806, C808-C817, C830-C842, C836-C849, C851-C860, C873-C886, C879-C893, C895-C904, C917-C929, C923-C936, C938-C947, C960-C972, C966-C979, C981-C990, C1003-C1015, C1009-C1022, C1024-C1033, C1046-C1058, C1052-C1065, C1067-C1076, C1089-C1101, C1095-C1108, C1110-C1119, C1132-C1144, C1138-C1151, C1153-C1162, C1175-C1187, C1181-C1194, C1196-C1205, C1218-C1231, C1224-C1238, C1240-C1249, C1262-C1274, C1268-C1281, C1283-C1292, C1305-C1317, C1311-C1324, C1326-C1335, C1348-C1360, C1354-C1367, C1369-C1378, C1391-C1403, C1397-C1410, C1412-C1421, C1434-C1446, C1440-C1453, C1455-C1464, C1477-C1489, C1483-C1496, C1498-C1507, C1520-C1532, C1526-C1539, and C1541-C1550. Positions 123–163 (DVDECASANGGCEGPCCNTVGGFYCRCPPGYQLQGDGKTCQ) constitute an EGF-like 1; calcium-binding domain. Residues 164 to 204 (DVDECRAHNGGCQHRCVNTPGSYLCECKPGFRLHTDGRTCL) form the EGF-like 2; calcium-binding domain. EGF-like domains are found at residues 205-246 (AISS…RRCV) and 247-287 (RRSP…KTCE). Positions 288–328 (DVDECALGLAQCAHGCLNTQGSFKCVCHAGYELGADGRQCY) constitute an EGF-like 5; calcium-binding domain. EGF-like domains are found at residues 334–374 (IVNS…KTCI) and 375–412 (DIDD…DGCG). In terms of domain architecture, EGF-like 8; calcium-binding spans 415-455 (DVDECASGHGGCEHHCSNLAGSFQCFCEAGYRLDEDRRGCT). EGF-like domains are found at residues 520-556 (FGHD…IICN), 564-599 (FGKN…AHCE), 607-642 (YGKH…RFCH), 650-687 (FGPG…ERCQ), 695-732 (FGPG…EDCG), 740-774 (FGVN…EDCG), 782-818 (WGLG…SRCQ), 826-861 (YGTG…LSCQ), 869-905 (WGPD…PRCE), 913-948 (YGPS…SFCE), 956-991 (FGLD…PRCA), 999-1034 (FGLN…PTCL), 1042-1077 (YGKN…LACE), 1085-1120 (YAAG…DKCQ), 1128-1163 (FGVH…PHCE), 1171-1206 (FGEA…LSCE), 1214-1250 (FGKD…TGCL), 1258-1293 (YGPG…ADCS), 1301-1336 (FGPS…VRCE), 1344-1379 (FGKG…PHCE), 1387-1422 (YGAA…QACE), 1430-1465 (HGPG…QFCE), 1473-1508 (FGDG…AACD), and 1516-1551 (FGPG…PTCR). Polar residues predominate over residues 1555–1568 (TQISSSRPAPQHPS). The segment at 1555–1574 (TQISSSRPAPQHPSSRAMKH) is disordered.

As to expression, expressed in lung.

Its subcellular location is the secreted. In Rattus norvegicus (Rat), this protein is Multiple epidermal growth factor-like domains protein 6 (Megf6).